A 268-amino-acid chain; its full sequence is Microtubule-associated protein RP/EB family member 1 (268 aa).

An N-acetylalanine modification is found at A2. In terms of domain architecture, Calponin-homology (CH) spans 14–116 (NLSRHDMLAW…FVQWFKKFFD (103 aa)). K66 carries the post-translational modification N6-crotonyllysine. Residue Y124 is modified to Phosphotyrosine. The interval 124–268 (YDPVAARQGQ…GGPQEEQEEY (145 aa)) is interaction with MTUS2/TIP150. The disordered stretch occupies residues 146-191 (LSKPKKPLGSGSAAPQRPIATQRTTAAPKAGPGMVRKNPGMGNGDD). Position 155 is a phosphoserine (S155). In terms of domain architecture, EB1 C-terminal spans 185 to 255 (GMGNGDDEAA…LYATDEGFVI (71 aa)). The tract at residues 206 to 211 (TVEDLE) is interaction with APC. A DCTN1-binding region spans residues 208–268 (EDLEKERDFY…GGPQEEQEEY (61 aa)). K220 carries the post-translational modification N6-acetyllysine. The APC-binding stretch occupies residues 220–242 (KLRNIELICQENEGENDPVLQRI). The interval 232–255 (EGENDPVLQRIVDILYATDEGFVI) is interaction with SKA1.

This sequence belongs to the MAPRE family. As to quaternary structure, homodimer. Heterodimer with MAPRE3. Interacts with DCTN1, DCTN2, TERF1 and dynein intermediate chain. Interaction with DIAPH1 and DIAPH2. Interacts (via C-terminal residues 206-211) with APC (via C-terminal residues 2674-2845); the interaction inhibits association with and bundling of F-actin. Interacts with CLASP2, DST, KIF2C and STIM1; probably required for their targeting to the growing microtubule plus ends. Interacts with MTUS2; interaction is direct and probably targets MTUS2 to microtubules. Interacts (via C-terminus) with SKA1 (via SXIP motif); the interaction is direct and stabilizes the kinetochore-microtubule attachment of the SKA1 complex. Interacts with APC2. Interacts with CLASP1. Interacts with CDK5RAP2. According to another report, MAPRE1 does not interact with CDK5RAP2. Interacts with MACF1. Interacts with RABL2/RABL2A; binds preferentially to GTP-bound RABL2. Interacts with KCNAB2. Interacts (via C-terminus) with CLIP1. Interacts with SLAIN2 and SLAIN1. Interacts with KIF18B; this interaction is required for efficient accumulation of KIF18B at microtubule plus ends. Interacts with MISP. Interacts with KNSTRN. Interacts with NCKAP5L. Interacts with AKAP9. Interacts with PDE4DIP; this interaction, which is PDE4DIP isoform-specific, is required for its recruitment to the Golgi apparatus. Interacts with CAMSAP2. May form a pericentrosomal complex with AKAP9, CDK5RAP2 and PDE4DIP isoform 2/MMG8/SMYLE; within this complex, MAPRE1 binding to CDK5RAP2 may be mediated by PDE4DIP. Contrary to other mammalian species, does not interact with CDK5RAP2, possibly due to the lack of conservation of the MAPRE1-binding motif in rat CDK5RAP2. Interacts with AKNA. Interacts with GAS2L1, GAS2L2, and GAS2L3. Interacts with RARRES1 and AGBL2. Acetylation at Lys-220 by KAT2B/PCAF promotes dynamic kinetochore-microtubule interactions in early mitosis. In terms of processing, crotonylated by KAT5 during mitosis, promoting astral microtubule plasticity and dynamic connection between astral microtubules and the cortex during mitotic chromosome segregation, thereby ensuring accurate spindle positioning in mitosis. Decrotonylated by HDAC3.

The protein localises to the cytoplasm. It is found in the cytoskeleton. Its subcellular location is the microtubule organizing center. The protein resides in the centrosome. It localises to the golgi apparatus. The protein localises to the spindle. It is found in the spindle pole. Its function is as follows. Plus-end tracking protein (+TIP) that binds to the plus-end of microtubules and regulates the dynamics of the microtubule cytoskeleton. Recruits other +TIP proteins to microtubules by binding to a conserved Ser-X-Leu-Pro (SXLP) motif in their polypeptide chains. Promotes cytoplasmic microtubule nucleation and elongation. Involved in mitotic spindle positioning by stabilizing microtubules and promoting dynamic connection between astral microtubules and the cortex during mitotic chromosome segregation. Assists chromosome alignment in metaphase by recruiting the SKA complex to the spindle and stabilizing its interactions with microtubule bundles (K-fibers). Also acts as a regulator of minus-end microtubule organization: interacts with the complex formed by AKAP9 and PDE4DIP, leading to recruit CAMSAP2 to the Golgi apparatus, thereby tethering non-centrosomal minus-end microtubules to the Golgi, an important step for polarized cell movement. Promotes elongation of CAMSAP2-decorated microtubule stretches on the minus-end of microtubules. Acts as a regulator of autophagosome transport via interaction with CAMSAP2. Functions downstream of Rho GTPases and DIAPH1 in stable microtubule formation. May play a role in cell migration. This is Microtubule-associated protein RP/EB family member 1 (Mapre1) from Rattus norvegicus (Rat).